A 1868-amino-acid chain; its full sequence is Proteasome component ECM29 (1868 aa).

S2 bears the N-acetylserine mark. HEAT repeat units follow at residues 32–69 (TNLQ…RINT), 116–153 (QDRQ…EWVA), 256–292 (PRMI…PYEN), 313–351 (PVKA…HSSE), 384–422 (DFST…LQRQ), 439–476 (VSDL…HLSI), 590–627 (PPFR…QCLI), 707–745 (SVLL…LSDN), 748–780 (AVCA…QTMA), 781–818 (ETYV…THLS), 846–885 (QERK…DLEN), 945–982 (TNVT…YLGH), 988–1025 (SKCN…IGGS), 1030–1067 (SMVK…LFEP), 1137–1174 (QTAK…ESSL), 1178–1215 (LYFN…SQPQ), 1272–1311 (EILD…HSPG), 1361–1398 (VTNS…KSVG), 1422–1459 (PYSG…VSAL), 1503–1540 (NVAS…SGAG), 1544–1581 (LYLP…GIND), and 1649–1687 (KYVK…LLGS). S1692 carries the post-translational modification Phosphoserine. HEAT repeat units lie at residues 1746–1785 (RYPM…GISI) and 1830–1867 (GLII…KNIG).

It belongs to the ECM29 family. In terms of assembly, component of the proteasome. ECM29 binds to both proteasome 19S and 20S particles.

It is found in the cytoplasm. Its subcellular location is the nucleus. Its function is as follows. Stabilizes the proteasome holoenzyme, probably by tethering the 20S proteolytic core particle and the 19S regulatory particle. The proteasome is a multicatalytic proteinase complex which is characterized by its ability to cleave peptides with Arg, Phe, Tyr, Leu, and Glu adjacent to the leaving group at neutral or slightly basic pH. The proteasome has an ATP-dependent proteolytic activity. The chain is Proteasome component ECM29 (ECM29) from Saccharomyces cerevisiae (strain ATCC 204508 / S288c) (Baker's yeast).